Reading from the N-terminus, the 79-residue chain is D-alanyl carrier protein (79 aa).

Residues 2–79 (AEFKEQVLDI…MVIKKLEEIR (78 aa)) enclose the Carrier domain. Ser37 is subject to O-(pantetheine 4'-phosphoryl)serine.

The protein belongs to the DltC family. In terms of processing, 4'-phosphopantetheine is transferred from CoA to a specific serine of apo-DCP.

It localises to the cytoplasm. It participates in cell wall biogenesis; lipoteichoic acid biosynthesis. In terms of biological role, carrier protein involved in the D-alanylation of lipoteichoic acid (LTA). The loading of thioester-linked D-alanine onto DltC is catalyzed by D-alanine--D-alanyl carrier protein ligase DltA. The DltC-carried D-alanyl group is further transferred to cell membrane phosphatidylglycerol (PG) by forming an ester bond, probably catalyzed by DltD. D-alanylation of LTA plays an important role in modulating the properties of the cell wall in Gram-positive bacteria, influencing the net charge of the cell wall. The sequence is that of D-alanyl carrier protein from Bacillus mycoides (strain KBAB4) (Bacillus weihenstephanensis).